The following is a 1090-amino-acid chain: Exocyst complex component SEC5B (1090 aa).

Residues 1–12 (MSSSDDLDEDEL) are compositionally biased toward acidic residues. The disordered stretch occupies residues 1–126 (MSSSDDLDED…ARKEDDRAWD (126 aa)). Over residues 23–46 (RDVTYQKPPSANSRKPVTNLVQQP) the composition is skewed to polar residues. A compositionally biased stretch (low complexity) spans 52–62 (AAAPPSKGGAK). A compositionally biased stretch (gly residues) spans 96–109 (GGGGDGGGGRGRGG). Over residues 110–126 (SGKERGRARKEDDRAWD) the composition is skewed to basic and acidic residues. Serine 179 carries the post-translational modification Phosphoserine. A compositionally biased stretch (polar residues) spans 486 to 502 (VQLSDDTSSMEDNQVQV). 3 disordered regions span residues 486 to 511 (VQLS…ESAR), 984 to 1013 (ETVE…QSSV), and 1055 to 1090 (PVAK…PRRR). The span at 999–1010 (RGSEDAISDDKQ) shows a compositional bias: basic and acidic residues. Polar residues predominate over residues 1062–1071 (SRTSTDSPSR).

This sequence belongs to the SEC5 family. As to quaternary structure, the exocyst complex is composed of SEC3, SEC5, SEC6, SEC8, SEC10, EXO70A1 and EXO84B.

Functionally, component of the exocyst complex involved in the docking of exocytic vesicles with fusion sites on the plasma membrane during regulated or polarized secretion. Involved in polarized cell growth and organ morphogenesis. During cytokinesis, involved in cell plate initiation, cell plate maturation and formation of new primary cell wall. The sequence is that of Exocyst complex component SEC5B (SEC5B) from Arabidopsis thaliana (Mouse-ear cress).